Consider the following 434-residue polypeptide: Serine hydroxymethyltransferase (434 aa).

(6S)-5,6,7,8-tetrahydrofolate is bound by residues Leu132 and 136–138; that span reads GHL. Lys241 carries the N6-(pyridoxal phosphate)lysine modification.

This sequence belongs to the SHMT family. Homodimer. Pyridoxal 5'-phosphate serves as cofactor.

It localises to the cytoplasm. The enzyme catalyses (6R)-5,10-methylene-5,6,7,8-tetrahydrofolate + glycine + H2O = (6S)-5,6,7,8-tetrahydrofolate + L-serine. It functions in the pathway one-carbon metabolism; tetrahydrofolate interconversion. Its pathway is amino-acid biosynthesis; glycine biosynthesis; glycine from L-serine: step 1/1. Functionally, catalyzes the reversible interconversion of serine and glycine with tetrahydrofolate (THF) serving as the one-carbon carrier. This reaction serves as the major source of one-carbon groups required for the biosynthesis of purines, thymidylate, methionine, and other important biomolecules. Also exhibits THF-independent aldolase activity toward beta-hydroxyamino acids, producing glycine and aldehydes, via a retro-aldol mechanism. The chain is Serine hydroxymethyltransferase from Kineococcus radiotolerans (strain ATCC BAA-149 / DSM 14245 / SRS30216).